Here is a 407-residue protein sequence, read N- to C-terminus: E3 ubiquitin-protein ligase TRIM13 (407 aa).

Residues 10–58 (CPICCSLFDDPRVLPCSHNFCKKCLEGLLEGNVRNSLWRPSPFKCPTCR) form an RING-type zinc finger. Residues 89 to 131 (PKMPVCKEHLGQPLNIFCVTDMQLICGVCATRGSHTKHVFSSI) form a B box-type zinc finger. The Zn(2+) site is built by cysteine 94, histidine 97, cysteine 117, and histidine 123. The stretch at 172-200 (LQLLTKDSDKVKEFFEKLQHTLDQKKNEI) forms a coiled coil. The chain crosses the membrane as a helical span at residues 316-336 (LLLMAVVLLGLLVFFGPTVFL).

As to quaternary structure, interacts (via C-terminal domain) with VCP. Interacts with AKT1; the interaction ubiquitinates AKT1 and leads to its proteasomal degradation. Interacts with MDM2; the interaction ubiquitinates AKT1 and leads to its proteasomal degradation. Interacts with p62/SQSTM1. Interacts with TRAF6. Interacts with IKBKG/NEMO. In terms of processing, auto-ubiquitinated; requires the RING-type zinc finger. Auto-polyubiquitination leads to proteasomal degradation.

The protein localises to the endoplasmic reticulum membrane. The enzyme catalyses S-ubiquitinyl-[E2 ubiquitin-conjugating enzyme]-L-cysteine + [acceptor protein]-L-lysine = [E2 ubiquitin-conjugating enzyme]-L-cysteine + N(6)-ubiquitinyl-[acceptor protein]-L-lysine.. The protein operates within protein modification; protein ubiquitination. Its function is as follows. Endoplasmic reticulum (ER) membrane anchored E3 ligase involved in the retrotranslocation and turnover of membrane and secretory proteins from the ER through a set of processes named ER-associated degradation (ERAD). This process acts on misfolded proteins as well as in the regulated degradation of correctly folded proteins. Enhances ionizing radiation-induced p53/TP53 stability and apoptosis via ubiquitinating MDM2 and AKT1 and decreasing AKT1 kinase activity through MDM2 and AKT1 proteasomal degradation. Regulates ER stress-induced autophagy, and may act as a tumor suppressor. Also plays a role in innate immune response by stimulating NF-kappa-B activity in the TLR2 signaling pathway. Ubiquitinates TRAF6 via the 'Lys-29'-linked polyubiquitination chain resulting in NF-kappa-B activation. Participates as well in T-cell receptor-mediated NF-kappa-B activation. In the presence of TNF, modulates the IKK complex by regulating IKBKG/NEMO ubiquitination leading to the repression of NF-kappa-B. In Rattus norvegicus (Rat), this protein is E3 ubiquitin-protein ligase TRIM13 (Trim13).